Consider the following 81-residue polypeptide: Large ribosomal subunit protein bL31 (81 aa).

Cys-16, Cys-18, Cys-38, and Cys-41 together coordinate Zn(2+).

It belongs to the bacterial ribosomal protein bL31 family. Type A subfamily. As to quaternary structure, part of the 50S ribosomal subunit. Requires Zn(2+) as cofactor.

Binds the 23S rRNA. The protein is Large ribosomal subunit protein bL31 of Mycobacterium sp. (strain JLS).